A 1954-amino-acid chain; its full sequence is Integrin beta-like protein C (1954 aa).

Positions 1–20 (MNKLFYLFILIASLFILTDA) are cleaved as a signal peptide. Topologically, residues 21–1883 (SHFRFGTISW…TTTQTNDNKT (1863 aa)) are extracellular. N-linked (GlcNAc...) asparagine glycosylation is found at N138 and N354. The EGF-like domain occupies 428-465 (YGENCVAVPPCVNGVPNSGINGDGKCLCSNGWTGADCS). 2 disulfide bridges follow: C438-C453 and C455-C464. A glycan (N-linked (GlcNAc...) asparagine) is linked at N479. The VWFA domain occupies 521–706 (DVYVLVDANL…TGVKNVLSKI (186 aa)). N-linked (GlcNAc...) asparagine glycosylation is found at N1348, N1382, N1628, N1678, N1742, N1770, N1820, N1860, and N1881. The chain crosses the membrane as a helical span at residues 1884–1904 (VLTGAIAGAAAGTALIAAAAW). Residues 1905–1954 (RLLRKAAPPTDTFFSEAAFLGDGVSSNPLYEQSASAAENPLYQSASDTTD) are Cytoplasmic-facing.

It belongs to the SIB family. Interacts with talA/talin.

The protein localises to the membrane. Functionally, implicated in cellular adhesion. The sequence is that of Integrin beta-like protein C (sibC) from Dictyostelium discoideum (Social amoeba).